We begin with the raw amino-acid sequence, 334 residues long: Endochitinase 3 (334 aa).

The signal sequence occupies residues 1-23; sequence MRLLEFTALSSLLVLFLLLAVSA. Residues 24 to 65 enclose the Chitin-binding type-1 domain; it reads EQCGKQAGGARCPSGMCCSNFGWCGNTQDYCGPGKCQSQCPS. Intrachain disulfides connect C26–C41, C35–C47, C40–C54, and C59–C63. The segment at 64–84 is disordered; sequence PSGPGPTPRPPTPTPGPSTGD. Over residues 66–79 the composition is skewed to pro residues; sequence GPGPTPRPPTPTPG. 4-hydroxyproline occurs at positions 73, 74, and 76. 3 disulfides stabilise this stretch: C106–C168, C180–C188, and C287–C319. E150 (proton donor) is an active-site residue. Residues 328–334 constitute a propeptide, removed in mature form; it reads GLLLETM.

This sequence belongs to the glycosyl hydrolase 19 family. Chitinase class I subfamily. Post-translationally, the 4-hydroxyproline residues are not glycosylated in this plant vacuolar protein.

The protein localises to the vacuole. The catalysed reaction is Random endo-hydrolysis of N-acetyl-beta-D-glucosaminide (1-&gt;4)-beta-linkages in chitin and chitodextrins.. In terms of biological role, defense against chitin-containing fungal pathogens. This Nicotiana tabacum (Common tobacco) protein is Endochitinase 3 (CHN14).